Here is a 504-residue protein sequence, read N- to C-terminus: Maturase K (504 aa).

Belongs to the intron maturase 2 family. MatK subfamily.

Its subcellular location is the plastid. The protein resides in the chloroplast. In terms of biological role, usually encoded in the trnK tRNA gene intron. Probably assists in splicing its own and other chloroplast group II introns. This Thlaspi arvense (Field penny-cress) protein is Maturase K.